A 222-amino-acid chain; its full sequence is ATP-dependent dethiobiotin synthetase BioD 2 (222 aa).

Thr17 lines the Mg(2+) pocket. Lys38 is a catalytic residue. Thr42 is a binding site for substrate. Positions 55 and 112 each coordinate Mg(2+). ATP contacts are provided by residues Asp55, 112–115 (EGCG), 172–173 (NR), 201–203 (PYL), and Glu208.

Belongs to the dethiobiotin synthetase family. Homodimer. Mg(2+) is required as a cofactor.

It is found in the cytoplasm. The enzyme catalyses (7R,8S)-7,8-diammoniononanoate + CO2 + ATP = (4R,5S)-dethiobiotin + ADP + phosphate + 3 H(+). The protein operates within cofactor biosynthesis; biotin biosynthesis; biotin from 7,8-diaminononanoate: step 1/2. In terms of biological role, catalyzes a mechanistically unusual reaction, the ATP-dependent insertion of CO2 between the N7 and N8 nitrogen atoms of 7,8-diaminopelargonic acid (DAPA, also called 7,8-diammoniononanoate) to form a ureido ring. The chain is ATP-dependent dethiobiotin synthetase BioD 2 from Yersinia pestis.